Here is a 122-residue protein sequence, read N- to C-terminus: Large ribosomal subunit protein uL14 (122 aa).

Belongs to the universal ribosomal protein uL14 family. As to quaternary structure, part of the 50S ribosomal subunit. Forms a cluster with proteins L3 and L19. In the 70S ribosome, L14 and L19 interact and together make contacts with the 16S rRNA in bridges B5 and B8.

Its function is as follows. Binds to 23S rRNA. Forms part of two intersubunit bridges in the 70S ribosome. The protein is Large ribosomal subunit protein uL14 of Campylobacter fetus subsp. fetus (strain 82-40).